A 72-amino-acid chain; its full sequence is MAKEKDTIRTEGVVTEALPNATFRVKLDSGPEILAYISGKMRMHYIRILPGDRVVVEITPYDPTRGRIVYRK.

In terms of domain architecture, S1-like spans 1–72 (MAKEKDTIRT…PTRGRIVYRK (72 aa)).

It belongs to the IF-1 family. As to quaternary structure, component of the 30S ribosomal translation pre-initiation complex which assembles on the 30S ribosome in the order IF-2 and IF-3, IF-1 and N-formylmethionyl-tRNA(fMet); mRNA recruitment can occur at any time during PIC assembly.

It localises to the cytoplasm. One of the essential components for the initiation of protein synthesis. Stabilizes the binding of IF-2 and IF-3 on the 30S subunit to which N-formylmethionyl-tRNA(fMet) subsequently binds. Helps modulate mRNA selection, yielding the 30S pre-initiation complex (PIC). Upon addition of the 50S ribosomal subunit IF-1, IF-2 and IF-3 are released leaving the mature 70S translation initiation complex. This is Translation initiation factor IF-1 from Thermus thermophilus (strain ATCC BAA-163 / DSM 7039 / HB27).